A 946-amino-acid polypeptide reads, in one-letter code: Zinc finger CCCH-type antiviral protein 1 (946 aa).

The segment at 1 to 254 (MTDPEVFCFI…DRSKSRDRFH (254 aa)) is N-terminal domain. The Nuclear localization signal motif lies at 69–76 (RARVCRRK). C3H1-type zinc fingers lie at residues 73–86 (CRRK…DSLH), 87–113 (LCKL…HDVL), 150–172 (CKSY…ERLH), and 173–194 (ICEH…HNLM). Disordered stretches follow at residues 221 to 283 (NKHT…KDPL) and 302 to 354 (RAQL…AAGF). Residues 224 to 254 (TRRNPPSMRAPHPHRRGGAHRDRSKSRDRFH) form a binding to EXOSC5 region. A compositionally biased stretch (basic and acidic residues) spans 242 to 257 (AHRDRSKSRDRFHHNS). S257 carries the post-translational modification Phosphoserine. At S262 the chain carries Phosphoserine; by GSK3-beta. Residues S265, S269, and S273 each carry the phosphoserine modification. T277 bears the Phosphothreonine mark. Residues 283–290 (LEDVSADV) carry the Nuclear export signal motif. Phosphoserine is present on residues S324 and S350. The short motif at 412–413 (KR) is the Nuclear localization signal element. Residue S425 is modified to Phosphoserine. Residues 461 to 491 (NPAWPGTSTHNGPNGFSQIMDETPNVSKSSP) are disordered. The segment covering 466–477 (GTSTHNGPNGFS) has biased composition (polar residues). A Phosphotyrosine modification is found at Y508. The interval 523–570 (GETTTPVQGSNRLPPSPLSSSTSHRVAASGSPGKSSTHASVSPASEPS) is disordered. Positions 524 to 533 (ETTTPVQGSN) are enriched in polar residues. S553 carries the phosphoserine modification. Residues 554–567 (PGKSSTHASVSPAS) are compositionally biased toward polar residues. Phosphoserine occurs at positions 583 and 680. In terms of domain architecture, WWE spans 684-771 (FVEKTLNSVF…ASKTQRHVVR (88 aa)). One can recognise a PARP catalytic domain in the interval 805–946 (SPQRNASTVS…SLDSSGLQRK (142 aa)).

It belongs to the ARTD/PARP family. As to quaternary structure, homodimer or homooligomer. Homooligomerization is essential for its antiviral activity. Interacts with EXOSC5. Interacts (via N-terminal domain) with DDX17 in an RNA-independent manner. Interacts with EXOSC3, EXOSC7, DCP2 and DCP1A. Interacts with PARN in an RNA-independent manner. Interacts with XRN1 in an RNA-dependent manner. Interacts (via N-terminal domain) with DHX30 (via N-terminus) in an RNA-independent manner. Isoform 2 interacts (via zinc-fingers) with RIGI in an RNA-dependent manner. In terms of processing, phosphorylation at Ser-273 is essential for sequential phosphorylation of Ser-269, Ser-265, Ser-262 and Ser-257 by GSK3-beta. Phosphorylation by GSK3-beta enhances its antiviral activity.

It localises to the cytoplasm. Its subcellular location is the nucleus. Its function is as follows. Antiviral protein which inhibits the replication of viruses by recruiting the cellular RNA degradation machineries to degrade the viral mRNAs. Binds to a ZAP-responsive element (ZRE) present in the target viral mRNA, recruits cellular poly(A)-specific ribonuclease PARN to remove the poly(A) tail, and the 3'-5' exoribonuclease complex exosome to degrade the RNA body from the 3'-end. It also recruits the decapping complex DCP1-DCP2 through RNA helicase p72 (DDX17) to remove the cap structure of the viral mRNA to initiate its degradation from the 5'-end. Its target viruses belong to families which include retroviridae: human immunodeficiency virus type 1 (HIV-1) and moloney and murine leukemia virus (MoMLV), filoviridae: ebola virus (EBOV) and marburg virus (MARV), togaviridae: sindbis virus (SINV) and Ross river virus (RRV). Specifically targets the multiply spliced but not unspliced or singly spliced HIV-1 mRNAs for degradation. Isoform 1 is a more potent viral inhibitor than isoform 2. Isoform 2 acts as a positive regulator of RIG-I signaling resulting in activation of the downstream effector IRF3 leading to the expression of type I IFNs and IFN stimulated genes (ISGs). This is Zinc finger CCCH-type antiviral protein 1 (Zc3hav1) from Mus musculus (Mouse).